The sequence spans 615 residues: Probable transporter mch1 (615 aa).

A disordered region spans residues 1–35 (MTGSIGQAPAIDKRDFDINRRSSTPHETAAQEDEA). Residues 11–20 (IDKRDFDINR) show a composition bias toward basic and acidic residues. Residues 84–104 (FVWGVITCLGAGSITAFSLYG) form a helical membrane-spanning segment. N112 carries an N-linked (GlcNAc...) asparagine glycan. 5 consecutive transmembrane segments (helical) span residues 120 to 140 (EVSIAAGISMYLPVSLAGYLC), 147 to 167 (PLTLFAGIAFGLGYSLAAFVY), 182 to 202 (FWVMVVAFIAIGVATCSMYLA), 218 to 238 (GIILAVPIAAFGLSGMWQSQV), and 261 to 281 (FLFLAILLLTIGVIGTFALRI). N329 carries N-linked (GlcNAc...) asparagine glycosylation. Helical transmembrane passes span 371–391 (IFLADHTMWWLALGFFLVTGP), 428–448 (IIALTSTIARLLTGSLSDLFA), 477–497 (LAFLIPSALLLSLGFLLLASP), 512–532 (LVGLGYGSIFSLVPIIISVVW), 538–558 (GTNWGIVAMFPAAGAAMWGVI), and 583–603 (FGFWSIGCTFSVWVAIVAWLV).

It belongs to the major facilitator superfamily.

The protein resides in the vacuole membrane. In terms of biological role, probable transporter. The protein is Probable transporter mch1 (mch1) of Emericella nidulans (strain FGSC A4 / ATCC 38163 / CBS 112.46 / NRRL 194 / M139) (Aspergillus nidulans).